The primary structure comprises 256 residues: H-2 class II histocompatibility antigen, A-B alpha chain (256 aa).

The signal sequence occupies residues 1 to 23 (MPRSRALILGVLALTTMLSLCGG). Positions 24–111 (EDDIEADHVG…KRSNSTPATN (88 aa)) are alpha-1. The Extracellular segment spans residues 24–218 (EDDIEADHVG…IPAPMSELTE (195 aa)). The tract at residues 112 to 205 (EAPQATVFPK…GLEEPVLKHW (94 aa)) is alpha-2. One can recognise an Ig-like C1-type domain in the interval 114–206 (PQATVFPKSP…LEEPVLKHWE (93 aa)). A disulfide bridge links Cys134 with Cys190. N-linked (GlcNAc...) asparagine glycosylation is present at Asn145. Residues 206-218 (EPEIPAPMSELTE) form a connecting peptide region. The helical transmembrane segment at 219–244 (TVVCALGLSVGLVGIVVGTIFIIQGL) threads the bilayer. The Cytoplasmic segment spans residues 245–256 (RSGGTSRHPGPL).

The protein belongs to the MHC class II family.

It is found in the membrane. The chain is H-2 class II histocompatibility antigen, A-B alpha chain (H2-Aa) from Mus musculus (Mouse).